The following is a 605-amino-acid chain: Leucine-rich repeat-containing protein 40 (605 aa).

The interval 1–21 (MSRFKRGGKAPDPLSGFRAPK) is disordered. 19 LRR repeats span residues 83–104 (DLTKLILASNKLQALSEDISLL), 106–127 (ALVVLDIHDNQIASLPCAIREL), 129–151 (NLQKLNISHNKIKQLPNELQHLQ), 152–173 (NLKSFLLQHNQLEELPDSIGHL), 175–196 (ILEELDVSNNCLRSVSSSVGQL), 198–219 (GLVKFNLSSNKLTALPTEIGKM), 221–242 (NLRQLDCTSNLLENVPASVAGM), 244–265 (SLEQLYLRQNKLTYLPELPFLT), 266–287 (KLKELHVGNNQIQTLGPEHLQN), 290–311 (SLSVLELRYNKLKVLPKEISLL), 313–335 (GLERLDLSNNDIGSLPDTLGSLP), 336–357 (NLKSLQLDGNPLRGIRRDILNK), 429–450 (PITTVNFSKNQLTEVPARIVEM), 453–475 (SVYDVNLGFNKISSISLNLCMLL), 476–497 (KLTHLDMRNNALASLPPEMEAL), 499–520 (RLQSIILSFNRFKHFPDVLYTI), 522–543 (NLETILISSNQIGSIDPIQLKK), 546–567 (KLSTLDLQNNDLLQIPPALGNC), and 569–590 (SLRALHLEGNPFRNPRATILAK).

This Xenopus laevis (African clawed frog) protein is Leucine-rich repeat-containing protein 40 (lrrc40).